The following is a 287-amino-acid chain: Orotidine 5'-phosphate decarboxylase (287 aa).

Catalysis depends on K97, which acts as the Proton donor.

This sequence belongs to the OMP decarboxylase family. Type 2 subfamily.

It carries out the reaction orotidine 5'-phosphate + H(+) = UMP + CO2. Its pathway is pyrimidine metabolism; UMP biosynthesis via de novo pathway; UMP from orotate: step 2/2. In Clostridium perfringens (strain SM101 / Type A), this protein is Orotidine 5'-phosphate decarboxylase.